The sequence spans 406 residues: uncharacterized protein (406 aa).

This is an uncharacterized protein from Aquifex aeolicus (strain VF5).